The primary structure comprises 109 residues: Large ribosomal subunit protein uL22 (109 aa).

It belongs to the universal ribosomal protein uL22 family. In terms of assembly, part of the 50S ribosomal subunit.

This protein binds specifically to 23S rRNA; its binding is stimulated by other ribosomal proteins, e.g. L4, L17, and L20. It is important during the early stages of 50S assembly. It makes multiple contacts with different domains of the 23S rRNA in the assembled 50S subunit and ribosome. In terms of biological role, the globular domain of the protein is located near the polypeptide exit tunnel on the outside of the subunit, while an extended beta-hairpin is found that lines the wall of the exit tunnel in the center of the 70S ribosome. The sequence is that of Large ribosomal subunit protein uL22 from Neisseria gonorrhoeae (strain ATCC 700825 / FA 1090).